The chain runs to 428 residues: CinA-like protein (428 aa).

This sequence belongs to the CinA family.

This chain is CinA-like protein, found in Mycobacterium leprae (strain TN).